The following is a 135-amino-acid chain: CDGSH iron-sulfur domain-containing protein 2A (135 aa).

Residues 1–37 (MVLESIARVIKVQLPAYLKRLPIPDSIAGFIRLTVSE) are Lumenal-facing. The helical transmembrane segment at 38-60 (WLRLLPFLGVLALLGYLAIRPFL) threads the bilayer. Topologically, residues 61–135 (LKKKQQKDSL…GPLILKKKEV (75 aa)) are cytoplasmic. C99, C101, C110, and H114 together coordinate [2Fe-2S] cluster.

The protein belongs to the CISD protein family. CISD2 subfamily. Homodimer. It depends on [2Fe-2S] cluster as a cofactor.

Its subcellular location is the endoplasmic reticulum membrane. The protein localises to the mitochondrion outer membrane. In terms of biological role, regulator of autophagy that contributes to antagonize becn1-mediated cellular autophagy at the endoplasmic reticulum. Participates in the interaction of bcl2 with becn1 and is required for bcl2-mediated depression of endoplasmic reticulum Ca(2+) stores during autophagy. The polypeptide is CDGSH iron-sulfur domain-containing protein 2A (cisd2-a) (Xenopus laevis (African clawed frog)).